We begin with the raw amino-acid sequence, 352 residues long: Maleylacetate reductase (352 aa).

NAD(+) is bound by residues 93–94 (GS) and 115–119 (TTYAG).

It belongs to the iron-containing alcohol dehydrogenase family. The maleylacetate reductase family of enzymes does not require any metal ion for activity, despite being related to the family III metal-dependent polyol dehydrogenases. is required as a cofactor.

It catalyses the reaction 3-oxoadipate + NAD(+) = maleylacetate + NADH + H(+). It participates in xenobiotic degradation; gamma-hexachlorocyclohexane degradation. Its function is as follows. Catalyzes the NADH-dependent reduction of maleylacetate to beta-ketoadipate, a step in the degradation of gamma-hexachlorocyclohexane (gamma-HCH or lindane). Has an essential role in this assimilation pathway that allows S.japonicum UT26 to grow on gamma-HCH as the sole source of carbon and energy. The polypeptide is Maleylacetate reductase (Sphingobium indicum (strain DSM 16413 / CCM 7287 / MTCC 6362 / UT26 / NBRC 101211 / UT26S) (Sphingobium japonicum)).